A 76-amino-acid chain; its full sequence is Omega-conotoxin-like TxMKLT1-0141 (76 aa).

The first 22 residues, 1 to 22, serve as a signal peptide directing secretion; sequence MKLTCMMIVAVLFLTAWTFATA. A propeptide spanning residues 23 to 50 is cleaved from the precursor; that stretch reads DDSSNGLENLFPKAHHEMKNPEASKLNE. Disulfide bonds link cysteine 52-cysteine 67, cysteine 59-cysteine 70, and cysteine 66-cysteine 75.

The protein belongs to the conotoxin O1 superfamily. Expressed by the venom duct.

It is found in the secreted. Functionally, omega-conotoxins act at presynaptic membranes, they bind and block voltage-gated calcium channels (Cav). This chain is Omega-conotoxin-like TxMKLT1-0141, found in Conus textile (Cloth-of-gold cone).